The chain runs to 114 residues: MATRRIISQEKTLLEKDDSIGSSPAADEKSNIAPAVPTSVIMKLLAFTLGMIVIPIGSYFATVDSVFNGNSTYAGALAAIMANVVLIGYIFVAMAEDQSDQQEGGGPGDGKKDR.

Residues 1–39 (MATRRIISQEKTLLEKDDSIGSSPAADEKSNIAPAVPTS) lie on the Cytoplasmic side of the membrane. The helical transmembrane segment at 40–60 (VIMKLLAFTLGMIVIPIGSYF) threads the bilayer. Residues 61–73 (ATVDSVFNGNSTY) lie on the Lumenal side of the membrane. Residues 74 to 94 (AGALAAIMANVVLIGYIFVAM) traverse the membrane as a helical segment. Residues 95 to 114 (AEDQSDQQEGGGPGDGKKDR) lie on the Cytoplasmic side of the membrane. Residues 111 to 114 (KKDR) carry the Prevents secretion from ER motif.

This sequence belongs to the VMA21 family.

It is found in the endoplasmic reticulum membrane. It localises to the endoplasmic reticulum-Golgi intermediate compartment membrane. Its subcellular location is the cytoplasmic vesicle. The protein localises to the COPII-coated vesicle membrane. Functionally, required for the assembly of the V0 complex of the vacuolar ATPase (V-ATPase) in the endoplasmic reticulum. This Chaetomium globosum (strain ATCC 6205 / CBS 148.51 / DSM 1962 / NBRC 6347 / NRRL 1970) (Soil fungus) protein is Vacuolar ATPase assembly integral membrane protein VMA21.